Consider the following 707-residue polypeptide: Caprin-1 (707 aa).

Composition is skewed to low complexity over residues 1-15 (MPSA…SKSS) and 22-43 (GSSG…PATG). Residues 1 to 48 (MPSATSHSGSGSKSSGPPPPSGSSGSEAAAGAAAPASQHPATGTGAVQ) form a disordered region. Proline 2 carries the post-translational modification N-acetylproline. The residue at position 10 (serine 10) is a Phosphoserine. The stretch at 58-92 (VIDKKLRNLEKKKGKLDDYQERMNKGERLNQDQLD) forms a coiled coil. Serine 113 carries the phosphoserine modification. The stretch at 123-151 (KTIKKTARREQLMREEAEQKRLKTVLELQ) forms a coiled coil. An Omega-N-methylarginine modification is found at arginine 163. Positions 325-347 (LQQQPQAASPSVPEPHSLTPVAQ) are disordered. The span at 326-335 (QQQPQAASPS) shows a compositional bias: low complexity. A phosphoserine mark is found at serine 333 and serine 341. Residues 358-379 (QDLMAQMQGPYNFIQDSMLDFE) form a G3BP1-binding region. Disordered stretches follow at residues 412–443 (ESRL…YTAS), 523–558 (PVPP…EQTE), and 570–620 (TYHG…RGLM). The segment covering 431 to 443 (PLVSSTSEGYTAS) has biased composition (polar residues). The span at 535-558 (QQSQYQASYNQSFSSQPHQVEQTE) shows a compositional bias: low complexity. Positions 572-603 (HGSQDQPHQVPGNHQQPPQQSTGFPRSSQPYY) are enriched in polar residues. Position 623 is a phosphotyrosine (tyrosine 623). Arginine 624 and arginine 631 each carry omega-N-methylarginine. A phosphotyrosine mark is found at tyrosine 634 and tyrosine 637. Residue arginine 638 is modified to Omega-N-methylarginine. The span at 641–655 (FSNTPNSGYTQSQFN) shows a compositional bias: polar residues. The disordered stretch occupies residues 641-707 (FSNTPNSGYT…MPQMNTQQVN (67 aa)). Residues serine 642 and serine 647 are each glycosylated (O-linked (GlcNAc) serine). 4 positions are modified to phosphotyrosine: tyrosine 649, tyrosine 660, tyrosine 663, and tyrosine 668. 2 stretches are compositionally biased toward low complexity: residues 674 to 684 (RGSGQSGPRGA) and 695 to 707 (NRGM…QQVN). Asymmetric dimethylarginine; alternate is present on arginine 696. At arginine 696 the chain carries Omega-N-methylarginine; alternate.

It belongs to the caprin family. May form homomultimers. Interacts with G3BP1; interaction is direct and promotes stress granule formation. Interacts with G3BP2; interaction is direct and promotes stress granule formation. Interacts with PQBP1. Interacts with DDX3X. Interacts (when phosphorylated by EPHA4) with FMR1; interaction with FMR1 promotes formation of a membraneless compartment. Post-translationally, tyrosine phosphorylation by EPHA4 promotes interaction with FMR1 and liquid-liquid phase separation (LLPS) for the formation of a membraneless compartment that concentrates mRNAs with associated regulatory factors. In terms of processing, O-glycosylated (O-GlcNAcylated), in a cell cycle-dependent manner. O-glycosylation by OGT inhibit ability to undergo liquid-liquid phase separation (LLPS). Expressed in hippocampal and neocortical pyramidal neurons, but not in Purkinje cells.

Its subcellular location is the cytoplasm. It is found in the cytoplasmic ribonucleoprotein granule. The protein localises to the cytosol. It localises to the cell projection. The protein resides in the dendrite. Its subcellular location is the lamellipodium. Its activity is regulated as follows. Ability to mediate liquid-liquid phase separation is regulated by ATP: moderate concentrations of ATP enhance phase separation, whereas high concentrations of ATP lead to inhibition of phase separation. Its function is as follows. mRNA-binding protein that acts as a regulator of mRNAs transport, translation and/or stability, and which is involved in neurogenesis, synaptic plasticity in neurons and cell proliferation and migration in multiple cell types. Plays an essential role in cytoplasmic stress granule formation. Acts as an mRNA regulator by mediating formation of some phase-separated membraneless compartment: undergoes liquid-liquid phase separation upon binding to target mRNAs, leading to assemble mRNAs into cytoplasmic ribonucleoprotein granules that concentrate mRNAs with associated regulatory factors. Undergoes liquid-liquid phase separation following phosphorylation and interaction with FMR1, promoting formation of cytoplasmic ribonucleoprotein granules that concentrate mRNAs with factors that inhibit translation and mediate deadenylation of target mRNAs. In these cytoplasmic ribonucleoprotein granules, CAPRIN1 mediates recruitment of CNOT7 deadenylase, leading to mRNA deadenylation and degradation. Binds directly and selectively to MYC and CCND2 mRNAs. In neuronal cells, directly binds to several mRNAs associated with RNA granules, including BDNF, CAMK2A, CREB1, MAP2, NTRK2 mRNAs, as well as to GRIN1 and KPNB1 mRNAs, but not to rRNAs. This Rattus norvegicus (Rat) protein is Caprin-1 (Caprin1).